Reading from the N-terminus, the 252-residue chain is Ribosomal RNA small subunit methyltransferase A (252 aa).

S-adenosyl-L-methionine is bound by residues Asn-11, Leu-13, Gly-38, Glu-60, Asp-82, and Asn-99.

Belongs to the class I-like SAM-binding methyltransferase superfamily. rRNA adenine N(6)-methyltransferase family. RsmA subfamily.

The protein resides in the cytoplasm. It catalyses the reaction adenosine(1518)/adenosine(1519) in 16S rRNA + 4 S-adenosyl-L-methionine = N(6)-dimethyladenosine(1518)/N(6)-dimethyladenosine(1519) in 16S rRNA + 4 S-adenosyl-L-homocysteine + 4 H(+). Its function is as follows. Specifically dimethylates two adjacent adenosines (A1518 and A1519) in the loop of a conserved hairpin near the 3'-end of 16S rRNA in the 30S particle. May play a critical role in biogenesis of 30S subunits. The sequence is that of Ribosomal RNA small subunit methyltransferase A from Hydrogenobaculum sp. (strain Y04AAS1).